The primary structure comprises 733 residues: 1,4-alpha-glucan branching enzyme GlgB (733 aa).

The Nucleophile role is filled by aspartate 413. Residue glutamate 466 is the Proton donor of the active site.

It belongs to the glycosyl hydrolase 13 family. GlgB subfamily. As to quaternary structure, monomer.

It carries out the reaction Transfers a segment of a (1-&gt;4)-alpha-D-glucan chain to a primary hydroxy group in a similar glucan chain.. The protein operates within glycan biosynthesis; glycogen biosynthesis. Its function is as follows. Catalyzes the formation of the alpha-1,6-glucosidic linkages in glycogen by scission of a 1,4-alpha-linked oligosaccharide from growing alpha-1,4-glucan chains and the subsequent attachment of the oligosaccharide to the alpha-1,6 position. The polypeptide is 1,4-alpha-glucan branching enzyme GlgB (Leifsonia xyli subsp. xyli (strain CTCB07)).